We begin with the raw amino-acid sequence, 361 residues long: UDP-N-acetylglucosamine--N-acetylmuramyl-(pentapeptide) pyrophosphoryl-undecaprenol N-acetylglucosamine transferase (361 aa).

UDP-N-acetyl-alpha-D-glucosamine contacts are provided by residues 12 to 14 (TGG), Asn124, Arg163, Ser189, Ile241, 260 to 265 (ALTVSE), and Gln286.

This sequence belongs to the glycosyltransferase 28 family. MurG subfamily.

It is found in the cell inner membrane. The enzyme catalyses di-trans,octa-cis-undecaprenyl diphospho-N-acetyl-alpha-D-muramoyl-L-alanyl-D-glutamyl-meso-2,6-diaminopimeloyl-D-alanyl-D-alanine + UDP-N-acetyl-alpha-D-glucosamine = di-trans,octa-cis-undecaprenyl diphospho-[N-acetyl-alpha-D-glucosaminyl-(1-&gt;4)]-N-acetyl-alpha-D-muramoyl-L-alanyl-D-glutamyl-meso-2,6-diaminopimeloyl-D-alanyl-D-alanine + UDP + H(+). It functions in the pathway cell wall biogenesis; peptidoglycan biosynthesis. Cell wall formation. Catalyzes the transfer of a GlcNAc subunit on undecaprenyl-pyrophosphoryl-MurNAc-pentapeptide (lipid intermediate I) to form undecaprenyl-pyrophosphoryl-MurNAc-(pentapeptide)GlcNAc (lipid intermediate II). The chain is UDP-N-acetylglucosamine--N-acetylmuramyl-(pentapeptide) pyrophosphoryl-undecaprenol N-acetylglucosamine transferase from Aeromonas hydrophila subsp. hydrophila (strain ATCC 7966 / DSM 30187 / BCRC 13018 / CCUG 14551 / JCM 1027 / KCTC 2358 / NCIMB 9240 / NCTC 8049).